A 259-amino-acid polypeptide reads, in one-letter code: UPF0246 protein Pmen_1032 (259 aa).

Belongs to the UPF0246 family.

The protein is UPF0246 protein Pmen_1032 of Ectopseudomonas mendocina (strain ymp) (Pseudomonas mendocina).